We begin with the raw amino-acid sequence, 487 residues long: Lysophospholipid acyltransferase 5 (487 aa).

Residue Ala-2 is modified to N-acetylalanine. The next 6 membrane-spanning stretches (helical) occupy residues 44-64 (LIIS…YLFY), 84-104 (FNFG…FLIL), 111-131 (ITAV…GYYY), 180-200 (GVPS…FLVG), 227-247 (IIPA…YTLL), and 285-305 (VTCW…FNGF). Residues Asn-338 and His-374 contribute to the active site. Transmembrane regions (helical) follow at residues 364–384 (GLSL…LVCF), 422–442 (LVQQ…FCLF), and 453–473 (SIYF…PYIH). The short motif at 484-487 (KKME) is the Di-lysine motif element.

Belongs to the membrane-bound acyltransferase family. In terms of tissue distribution, highly expressed in liver, pancreas and adipose tissue. Very low expression in skeletal muscle and heart. Detected in neutrophils.

The protein resides in the endoplasmic reticulum membrane. The catalysed reaction is a 1-acyl-sn-glycero-3-phosphocholine + an acyl-CoA = a 1,2-diacyl-sn-glycero-3-phosphocholine + CoA. The enzyme catalyses a 1-acyl-sn-glycero-3-phosphoethanolamine + an acyl-CoA = a 1,2-diacyl-sn-glycero-3-phosphoethanolamine + CoA. It carries out the reaction a 1-acyl-sn-glycero-3-phospho-L-serine + an acyl-CoA = a 1,2-diacyl-sn-glycero-3-phospho-L-serine + CoA. It catalyses the reaction (9Z,12Z)-octadecadienoyl-CoA + a 1-acyl-sn-glycero-3-phosphocholine = 1-acyl-2-(9Z,12Z)-octadecadienoyl-sn-glycero-3-phosphocholine + CoA. The catalysed reaction is (5Z,8Z,11Z,14Z)-eicosatetraenoyl-CoA + a 1-acyl-sn-glycero-3-phosphocholine = 1-acyl-2-(5Z,8Z,11Z,14Z-eicosatetraenoyl)-sn-glycero-3-phosphocholine + CoA. The enzyme catalyses dodecanoyl-CoA + 1-hexadecanoyl-sn-glycero-3-phosphocholine = 1-hexadecanoyl-2-dodecanoyl-sn-glycero-3-phosphocholine + CoA. It carries out the reaction octadecanoyl-CoA + 1-hexadecanoyl-sn-glycero-3-phosphocholine = 1-hexadecanoyl-2-octadecanoyl-sn-glycero-3-phosphocholine + CoA. It catalyses the reaction 1-dodecanoyl-sn-glycero-3-phosphocholine + hexadecanoyl-CoA = 1-dodecanoyl-2-hexadecanoyl-sn-glycero-3-phosphocholine + CoA. The catalysed reaction is 1-tetradecanoyl-sn-glycero-3-phosphocholine + hexadecanoyl-CoA = 1-tetradecanoyl-2-hexadecanoyl-sn-glycero-3-phosphocholine + CoA. The enzyme catalyses 1-hexadecanoyl-sn-glycero-3-phosphocholine + hexadecanoyl-CoA = 1,2-dihexadecanoyl-sn-glycero-3-phosphocholine + CoA. It carries out the reaction 1-octadecanoyl-sn-glycero-3-phosphocholine + hexadecanoyl-CoA = 1-octadecanoyl-2-hexadecanoyl-sn-glycero-3-phosphocholine + CoA. It catalyses the reaction 1-(9Z-octadecenoyl)-sn-glycero-3-phosphocholine + hexadecanoyl-CoA = 1-(9Z-octadecenoyl)-2-hexadecanoyl-sn-glycero-3-phosphocholine + CoA. The catalysed reaction is (9Z)-hexadecenoyl-CoA + 1-hexadecanoyl-sn-glycero-3-phosphocholine = 1-hexadecanoyl-2-(9Z-hexadecenoyl)-sn-glycero-3-phosphocholine + CoA. The enzyme catalyses 1-hexadecanoyl-sn-glycero-3-phosphocholine + (9Z)-octadecenoyl-CoA = 1-hexadecanoyl-2-(9Z-octadecenoyl)-sn-glycero-3-phosphocholine + CoA. It carries out the reaction (9Z,12Z)-octadecadienoyl-CoA + 1-hexadecanoyl-sn-glycero-3-phosphocholine = 1-hexadecanoyl-2-(9Z,12Z-octadecadienoyl)-sn-glycero-3-phosphocholine + CoA. It catalyses the reaction 1-dodecanoyl-sn-glycero-3-phosphocholine + (5Z,8Z,11Z,14Z)-eicosatetraenoyl-CoA = 1-dodecanoyl-2-(5Z,8Z,11Z,14Z)-eicosatetraenoyl-sn-glycero-3-phosphocholine + CoA. The catalysed reaction is (5Z,8Z,11Z,14Z)-eicosatetraenoyl-CoA + 1-hexadecanoyl-sn-glycero-3-phosphocholine = 1-hexadecanoyl-2-(5Z,8Z,11Z,14Z-eicosatetraenoyl)-sn-glycero-3-phosphocholine + CoA. The enzyme catalyses 1-octadecanoyl-sn-glycero-3-phosphocholine + (5Z,8Z,11Z,14Z)-eicosatetraenoyl-CoA = 1-octadecanoyl-2-(5Z,8Z,11Z,14Z-eicosatetraenoyl)-sn-glycero-3-phosphocholine + CoA. It carries out the reaction 1-eicosanoyl-sn-glycero-3-phosphocholine + (5Z,8Z,11Z,14Z)-eicosatetraenoyl-CoA = 1-eicosanoyl-2-(5Z,8Z,11Z,14Z)-eicosatetraenoyl-sn-glycero-3-phosphocholine + CoA. It catalyses the reaction 1-(9Z-octadecenoyl)-sn-glycero-3-phosphocholine + (9Z)-octadecenoyl-CoA = 1,2-di-(9Z-octadecenoyl)-sn-glycero-3-phosphocholine + CoA. The catalysed reaction is 1-(9Z-octadecenoyl)-sn-glycero-3-phosphocholine + (9Z,12Z)-octadecadienoyl-CoA = 1-(9Z)-octadecenoyl-2-(9Z,12Z)-octadecadienoyl-sn-glycero-3-phosphocholine + CoA. The enzyme catalyses 1-(9Z-octadecenoyl)-sn-glycero-3-phosphocholine + (5Z,8Z,11Z,14Z)-eicosatetraenoyl-CoA = 1-(9Z)-octadecenoyl-2-(5Z,8Z,11Z,14Z)-icosatetraenoyl-sn-glycero-3-phosphocholine + CoA. It carries out the reaction a 1-acyl-sn-glycero-3-phosphoethanolamine + (9Z,12Z)-octadecadienoyl-CoA = 1-acyl-2-(9Z,12Z)-octadecadienoyl-sn-glycero-3-phosphoethanolamine + CoA. It catalyses the reaction 1-(9Z-octadecenoyl)-sn-glycero-3-phosphoethanolamine + (9Z,12Z)-octadecadienoyl-CoA = 1-(9Z)-octadecenoyl-2-(9Z,12Z)-octadecadienoyl-sn-glycero-3-phosphoethanolamine + CoA. The catalysed reaction is 1-(10Z-heptadecenoyl)-sn-glycero-3-phosphoethanolamine + (9Z,12Z)-octadecadienoyl-CoA = 1-(10Z-heptadecenoyl)-2-(9Z,12Z-octadecadienoyl)-sn-glycero-3-phosphoethanolamine + CoA. The enzyme catalyses a 1-acyl-sn-glycero-3-phosphoethanolamine + (5Z,8Z,11Z,14Z)-eicosatetraenoyl-CoA = 1-acyl-2-(5Z,8Z,11Z,14Z)-eicosatetraenoyl-sn-glycero-3-phosphoethanolamine + CoA. It carries out the reaction 1-hexadecanoyl-sn-glycero-3-phosphoethanolamine + (5Z,8Z,11Z,14Z)-eicosatetraenoyl-CoA = 1-hexadecanoyl-2-(5Z,8Z,11Z,14Z-eicosatetraenoyl)-sn-glycero-3-phosphoethanolamine + CoA. It catalyses the reaction 1-(9Z-octadecenoyl)-sn-glycero-3-phosphoethanolamine + (5Z,8Z,11Z,14Z)-eicosatetraenoyl-CoA = 1-(9Z)-octadecenoyl-2-(5Z,8Z,11Z,14Z)-eicosatetraenoyl-sn-glycero-3-phosphoethanolamine + CoA. The catalysed reaction is 1-(10Z-heptadecenoyl)-sn-glycero-3-phosphoethanolamine + (5Z,8Z,11Z,14Z)-eicosatetraenoyl-CoA = 1-(10Z-heptadecenoyl)-2-(5Z,8Z,11Z,14Z-eicosatetraenoyl)-sn-glycero-3-phosphoethanolamine + CoA. The enzyme catalyses a 1-O-(1Z-alkenyl)-sn-glycero-3-phosphoethanolamine + (5Z,8Z,11Z,14Z)-eicosatetraenoyl-CoA = 1-O-(1Z)-alkenyl-2-(5Z,8Z,11Z,14Z)-eicosatetraenoyl-sn-glycero-3-phosphoethanolamine + CoA. It carries out the reaction a 1-acyl-sn-glycero-3-phospho-L-serine + (9Z,12Z)-octadecadienoyl-CoA = 1-acyl-2-(9Z,12Z-octadecadienoyl)-sn-glycero-3-phospho-L-serine + CoA. It catalyses the reaction a 1-acyl-sn-glycero-3-phospho-L-serine + (5Z,8Z,11Z,14Z)-eicosatetraenoyl-CoA = 1-acyl-2-(5Z,8Z,11Z,14Z-eicosatetraenoyl)-sn-glycero-3-phospho-L-serine + CoA. The catalysed reaction is 1-hexadecanoyl-sn-glycero-3-phospho-L-serine + (9Z)-octadecenoyl-CoA = 1-hexadecanoyl-2-(9Z-octadecenoyl)-sn-glycero-3-phospho-L-serine + CoA. The enzyme catalyses 1-(9Z-octadecenoyl)-sn-glycero-3-phospho-L-serine + (9Z)-octadecenoyl-CoA = 1,2-di-(9Z)-octadecenoyl-sn-glycero-3-phospho-L-serine + CoA. It carries out the reaction 1-hexadecanoyl-sn-glycero-3-phospho-L-serine + (9Z,12Z)-octadecadienoyl-CoA = 1-hexadecanoyl-2-(9Z,12Z-octadecadienoyl)-sn-glycero-3-phospho-L-serine + CoA. It catalyses the reaction 1-(9Z-octadecenoyl)-sn-glycero-3-phospho-L-serine + (9Z,12Z)-octadecadienoyl-CoA = 1-(9Z-octadecenoyl)-2-(9Z,12Z-octadienoyl)-sn-glycero-3-phospho-L-serine + CoA. The catalysed reaction is 1-hexadecanoyl-sn-glycero-3-phospho-L-serine + (5Z,8Z,11Z,14Z)-eicosatetraenoyl-CoA = 1-hexadecanoyl-2-(5Z,8Z,11Z,14Z-eicosatetraenoyl)-sn-glycero-3-phospho-L-serine + CoA. The enzyme catalyses 1-(9Z-octadecenoyl)-sn-glycero-3-phospho-L-serine + (5Z,8Z,11Z,14Z)-eicosatetraenoyl-CoA = 1-(9Z-octadecenoyl)-2-(5Z,8Z,11Z,14Z-eicosatetraenoyl)-sn-glycero-3-phospho-L-serine + CoA. The protein operates within lipid metabolism; phospholipid metabolism. Activity is inhibited by thimerosal. Functionally, lysophospholipid O-acyltransferase (LPLAT) that catalyzes the reacylation step of the phospholipid remodeling process also known as the Lands cycle. Catalyzes transfer of the fatty acyl chain from fatty acyl-CoA to 1-acyl lysophospholipid to form various classes of phospholipids. Converts 1-acyl lysophosphatidylcholine (LPC) into phosphatidylcholine (PC) (LPCAT activity), 1-acyl lysophosphatidylserine (LPS) into phosphatidylserine (PS) (LPSAT activity) and 1-acyl lysophosphatidylethanolamine (LPE) into phosphatidylethanolamine (PE) (LPEAT activity). Favors polyunsaturated fatty acyl-CoAs as acyl donors compared to saturated fatty acyl-CoAs. Has higher activity for LPC acyl acceptors compared to LPEs and LPSs. Can also transfer the fatty acyl chain from fatty acyl-CoA to 1-O-alkyl lysophospholipid or 1-O-alkenyl lysophospholipid with lower efficiency. Acts as a major LPC O-acyltransferase in liver and intestine. As a component of the liver X receptor/NR1H3 or NR1H2 signaling pathway, mainly catalyzes the incorporation of arachidonate into PCs of endoplasmic reticulum (ER) membranes, increasing membrane dynamics and enabling triacylglycerols transfer to nascent very low-density lipoprotein (VLDL) particles. Promotes processing of sterol regulatory protein SREBF1 in hepatocytes, likely by facilitating the translocation of SREBF1-SCAP complex from ER to the Golgi apparatus. Participates in mechanisms by which the liver X receptor/NR1H3 or NR1H2 signaling pathway counteracts lipid-induced ER stress response and inflammation. Down-regulates hepatic inflammation by limiting arachidonic acid availability for synthesis of inflammatory eicosanoids, such as prostaglandins. In enterocytes, acts as a component of a gut-brain feedback loop that coordinates dietary lipid absorption and food intake. Regulates the abundance of PCs containing linoleate and arachidonate in enterocyte membranes, enabling passive diffusion of fatty acids and cholesterol across the membrane for efficient chylomicron assembly. In the intestinal crypt, acts as a component of dietary-responsive phospholipid-cholesterol axis, regulating the biosynthesis of cholesterol and its mitogenic effects on intestinal stem cells. This Homo sapiens (Human) protein is Lysophospholipid acyltransferase 5 (LPCAT3).